The primary structure comprises 335 residues: Erlin-2-A (335 aa).

Over 1–2 (MS) the chain is Cytoplasmic. Residues 3–23 (HAGAIVGLGVALIAAALFSAI) traverse the membrane as a helical segment. Over 24 to 335 (HKIEEGHVGV…GLDEAASAEE (312 aa)) the chain is Lumenal. Asn106 carries an N-linked (GlcNAc...) asparagine glycan.

It belongs to the band 7/mec-2 family.

The protein resides in the endoplasmic reticulum membrane. Mediates the endoplasmic reticulum-associated degradation (ERAD) of inositol 1,4,5-trisphosphate receptors (IP3Rs). Promotes sterol-accelerated ERAD of HMGCR. Involved in regulation of cellular cholesterol homeostasis by regulation the SREBP signaling pathway. In Xenopus laevis (African clawed frog), this protein is Erlin-2-A (erlin2-a).